The following is a 271-amino-acid chain: Undecaprenyl-diphosphatase (271 aa).

8 helical membrane-spanning segments follow: residues 5-25 (LLIK…LPIS), 43-63 (FATM…VYYF), 80-100 (GFNL…IGIL), 109-129 (LFSP…MIVI), 145-165 (VSTS…FPGM), 186-206 (AEFS…FELV), 215-235 (LEWE…LIVV), and 246-266 (VLKP…FLIA).

Belongs to the UppP family.

It is found in the cell membrane. It carries out the reaction di-trans,octa-cis-undecaprenyl diphosphate + H2O = di-trans,octa-cis-undecaprenyl phosphate + phosphate + H(+). Catalyzes the dephosphorylation of undecaprenyl diphosphate (UPP). Confers resistance to bacitracin. The protein is Undecaprenyl-diphosphatase of Caldanaerobacter subterraneus subsp. tengcongensis (strain DSM 15242 / JCM 11007 / NBRC 100824 / MB4) (Thermoanaerobacter tengcongensis).